Reading from the N-terminus, the 365-residue chain is G-protein coupled receptor 68 (365 aa).

The Extracellular segment spans residues 1–12; the sequence is MGNITTENSSLS. Asn3 and Asn8 each carry an N-linked (GlcNAc...) asparagine glycan. Residues 13 to 49 form a helical membrane-spanning segment; sequence CPIDHTIHQTLAPVVYVTVLVVGFPANCLSLYFGYLQ. 2 disulfide bridges follow: Cys13/Cys258 and Cys94/Cys172. Residues 50 to 53 are Cytoplasmic-facing; the sequence is IKAR. The helical transmembrane segment at 54-84 threads the bilayer; the sequence is NELGVYLCNLTIADLFYICSLPFWLQYVLQH. Over 85-89 the chain is Extracellular; it reads DDWSH. Residues 90–125 form a helical membrane-spanning segment; the sequence is GDLSCQVCGILLYENIYISVGFLCCISIDRYLAVAH. Topologically, residues 126–133 are cytoplasmic; it reads PFRFHQFR. A helical membrane pass occupies residues 134–160; that stretch reads TLKAAVGVSVLIWAKELLTSIYFLNHK. Residues 161–176 are Extracellular-facing; the sequence is EVIEDEDQHRVCFEHY. The interval 161-176 is extracellular loop 2 (ECL2); sequence EVIEDEDQHRVCFEHY. A helical membrane pass occupies residues 177-214; that stretch reads PIQAWQRSINYYRFLVGFLFPICLLLASYQGILRAVRR. Over 215-218 the chain is Cytoplasmic; sequence SHGT. Residues 219–254 traverse the membrane as a helical segment; that stretch reads QKSRKDQIQRLVLSTVVIFLACFLPYHVLLLVRSLW. The Extracellular portion of the chain corresponds to 255–260; that stretch reads ERNCEF. A helical transmembrane segment spans residues 261–289; that stretch reads AKSIFNVYHFSLLLTSFNCVADPVLYCFV. Topologically, residues 290 to 365 are cytoplasmic; it reads SETTHRDLAR…VGGPSTVGLA (76 aa).

This sequence belongs to the G-protein coupled receptor 1 family. As to expression, expressed in the lung, testis, heart, brain, spleen, thymus, brown fat, small intestine, colon, peripheral blood leukocytes, macrophages, stomach, ovary and white fat but not in the liver, kidney, and skeletal muscle. Expression in the prostate is weak but detectable. Specifically expressed in endothelial cells of small-diameter resistance arteries.

The protein localises to the cell membrane. With respect to regulation, activated by a network of residues that connects an extracellular-facing cavity to Glu-149, a conserved charged residue buried in the transmembrane core of the receptor. Protonation likely drives conformational changes in extracellular loop 2 (ECL2), which stabilizes movement of transmembrane 3 (TM3) and a series of rearrangements that connect the extracellular-facing cavity to Glu-149, a residue only conserved in proton-sensing G-protein coupled receptors. Activated in an allosteric manner by divalent metal ions at the extracellular surface following the order: Cd(2+) &gt; Co(2+) &gt; Ni(2+) &gt; Zn(2+) &gt; Fe(2+) &gt; Ca(2+) &gt; Mg(2+). Activated by ogerin (ZINC67740571), a selective GPR68 positive allosteric modulator. Inhibited by small molecule GPR68-I, decreasing inflammation in models of colitis. Its function is as follows. Proton-sensing G-protein coupled receptor activated by extracellular pH, which is required to monitor pH changes and generate adaptive reactions. The receptor is almost silent at pH 7.8 but fully activated at pH 6.8. Ligand binding causes a conformation change that triggers signaling via guanine nucleotide-binding proteins (G proteins) and modulates the activity of downstream effectors, such as phospholipase C. GPR68 is mainly coupled to G(q) G proteins and mediates production of diacylglycerol (DAG) and inositol 1,4,5-trisphosphate (IP3). Acts as a key mechanosensor of fluid shear stress and membrane stretch. Expressed in endothelial cells of small-diameter resistance arteries, where it mediates flow-induced dilation in response to shear stress. May represents an osteoblastic pH sensor regulating cell-mediated responses to acidosis in bone. Acts as a regulator of calcium-sensing receptor CASR in a seesaw manner: GPR68-mediated signaling inhibits CASR signaling in response to protons, while CASR inhibits GPR68 in presence of extracellular calcium. Also functions as a metastasis suppressor gene in prostate cancer. The chain is G-protein coupled receptor 68 from Mus musculus (Mouse).